The primary structure comprises 373 residues: MTSALCSKSTAPHTLSDDVADLSHSNTMALACTANSVVTLKNEAQLDEFMANYGQDTQYSQPLFVLSGGSNVLLPAKLNAIVLRPQMRGIQVTSQTDSHVDIEVMAGENWHDLVLHTVAQGWYGLENLALIPGLTGAAPIQNIGAYGVQLEDCLQYVRAYHFPSQTWHDLTAVDCEFGYRDSIFKRQPNTWLISRVGFRLHTDATKVLASYGDVQTVAQGYAMKQSRTKPTPADVMHAIIDIRQQKLPDPKQLPNCGSFFQNPIIPQDQFTALQSSYPAIVGYPMPDAMIKVAAGWLIEQAGLKGGGIEPIVTHQQQALVLTNHTPYQATQKEVAAAQQYITDTVYERFAIPLSREPVWVNADGSIGYDKHVV.

The FAD-binding PCMH-type domain occupies 30-203 (LACTANSVVT…SRVGFRLHTD (174 aa)). R180 is a catalytic residue. S258 serves as the catalytic Proton donor. The active site involves E356.

It belongs to the MurB family. The cofactor is FAD.

The protein resides in the cytoplasm. The catalysed reaction is UDP-N-acetyl-alpha-D-muramate + NADP(+) = UDP-N-acetyl-3-O-(1-carboxyvinyl)-alpha-D-glucosamine + NADPH + H(+). Its pathway is cell wall biogenesis; peptidoglycan biosynthesis. Cell wall formation. In Psychrobacter arcticus (strain DSM 17307 / VKM B-2377 / 273-4), this protein is UDP-N-acetylenolpyruvoylglucosamine reductase.